We begin with the raw amino-acid sequence, 180 residues long: Acireductone dioxygenase (180 aa).

Fe(2+) contacts are provided by H97, H99, E103, and H141. Ni(2+)-binding residues include H97, H99, E103, and H141.

This sequence belongs to the acireductone dioxygenase (ARD) family. Monomer. The cofactor is Fe(2+). Requires Ni(2+) as cofactor.

The catalysed reaction is 1,2-dihydroxy-5-(methylsulfanyl)pent-1-en-3-one + O2 = 3-(methylsulfanyl)propanoate + CO + formate + 2 H(+). It carries out the reaction 1,2-dihydroxy-5-(methylsulfanyl)pent-1-en-3-one + O2 = 4-methylsulfanyl-2-oxobutanoate + formate + 2 H(+). The protein operates within amino-acid biosynthesis; L-methionine biosynthesis via salvage pathway; L-methionine from S-methyl-5-thio-alpha-D-ribose 1-phosphate: step 5/6. Its function is as follows. Catalyzes 2 different reactions between oxygen and the acireductone 1,2-dihydroxy-3-keto-5-methylthiopentene (DHK-MTPene) depending upon the metal bound in the active site. Fe-containing acireductone dioxygenase (Fe-ARD) produces formate and 2-keto-4-methylthiobutyrate (KMTB), the alpha-ketoacid precursor of methionine in the methionine recycle pathway. Ni-containing acireductone dioxygenase (Ni-ARD) produces methylthiopropionate, carbon monoxide and formate, and does not lie on the methionine recycle pathway. In Yersinia enterocolitica serotype O:8 / biotype 1B (strain NCTC 13174 / 8081), this protein is Acireductone dioxygenase.